The chain runs to 102 residues: NADH-quinone oxidoreductase subunit K (102 aa).

The next 3 membrane-spanning stretches (helical) occupy residues 5–25 (ITHY…GIFL), 31–51 (IIIL…FVAF), and 66–86 (FVLT…VVFF).

Belongs to the complex I subunit 4L family. As to quaternary structure, NDH-1 is composed of 14 different subunits. Subunits NuoA, H, J, K, L, M, N constitute the membrane sector of the complex.

Its subcellular location is the cell inner membrane. It carries out the reaction a quinone + NADH + 5 H(+)(in) = a quinol + NAD(+) + 4 H(+)(out). NDH-1 shuttles electrons from NADH, via FMN and iron-sulfur (Fe-S) centers, to quinones in the respiratory chain. The immediate electron acceptor for the enzyme in this species is believed to be ubiquinone. Couples the redox reaction to proton translocation (for every two electrons transferred, four hydrogen ions are translocated across the cytoplasmic membrane), and thus conserves the redox energy in a proton gradient. This Bartonella grahamii (strain as4aup) protein is NADH-quinone oxidoreductase subunit K.